The primary structure comprises 216 residues: Ethylene-responsive transcription factor ERF016 (216 aa).

Positions 6–63 (KYTGVRKRKWGKWVAEIRLPNSRDRIWLGSFDSAEKAARAFDAALYCLRGPGARFNFP) form a DNA-binding region, AP2/ERF. Residues 121 to 145 (EINSGSGGPTLGQVGEDNNNEGNSN) form a disordered region. Over residues 135–145 (GEDNNNEGNSN) the composition is skewed to low complexity.

Belongs to the AP2/ERF transcription factor family. ERF subfamily.

The protein localises to the nucleus. Probably acts as a transcriptional activator. Binds to the GCC-box pathogenesis-related promoter element. May be involved in the regulation of gene expression by stress factors and by components of stress signal transduction pathways. This chain is Ethylene-responsive transcription factor ERF016 (ERF016), found in Arabidopsis thaliana (Mouse-ear cress).